Here is a 139-residue protein sequence, read N- to C-terminus: ATP synthase epsilon chain (139 aa).

Belongs to the ATPase epsilon chain family. As to quaternary structure, F-type ATPases have 2 components, CF(1) - the catalytic core - and CF(0) - the membrane proton channel. CF(1) has five subunits: alpha(3), beta(3), gamma(1), delta(1), epsilon(1). CF(0) has three main subunits: a, b and c.

Its subcellular location is the cell membrane. Produces ATP from ADP in the presence of a proton gradient across the membrane. The protein is ATP synthase epsilon chain of Ligilactobacillus salivarius (strain UCC118) (Lactobacillus salivarius).